The sequence spans 277 residues: Large ribosomal subunit protein uL2c (277 aa).

The disordered stretch occupies residues 223–277 (VVMNPIDHPHGGGEGRAPIGRKKPLTPWGHPALGKRSRKNNKYSDTLILRRRKNS).

This sequence belongs to the universal ribosomal protein uL2 family. As to quaternary structure, part of the 50S ribosomal subunit.

It is found in the plastid. The protein localises to the chloroplast. The protein is Large ribosomal subunit protein uL2c (rpl2) of Marchantia polymorpha (Common liverwort).